A 3744-amino-acid polypeptide reads, in one-letter code: SAGA complex/NuA4 acetyltransferase complex subunit TRA1 (3744 aa).

Ser-2 is modified (N-acetylserine). HEAT repeat units lie at residues 2 to 40 (SLTEQIEQFASRFRDDDATLQSRYSTLSELYDIMELLNS), 46 to 92 (FFLQ…NQTF), 94 to 131 (PYAMEVLEFLLSVLPKENEENGILCMKVLTTLFKSFKS), and 135 to 172 (DKLDSFIRIIIQIYKNTPNLINQTFYEAGKAEQGDLDS). Residues 2-2598 (SLTEQIEQFA…KPYHTRQISS (2597 aa)) form an HEAT region. Ser-172 carries the phosphoserine modification. The span at 185–195 (FSKNDEEKDFP) shows a compositional bias: basic and acidic residues. Positions 185–212 (FSKNDEEKDFPSKQSSTEPRFENSTSSN) are disordered. Residues 196–212 (SKQSSTEPRFENSTSSN) show a composition bias toward polar residues. HEAT repeat units lie at residues 247–284 (PEFTPLIMNLLNIQIKQQQEAREQAESRGEHFTSISTE), 319–357 (QDYVNFVPDLIIRLLQDCPSELSSARKELLHATRHILST), and 437–477 (KLLL…RFKT). Residues 522–539 (LEPSDDDHLMPQPKKEDI) are compositionally biased toward basic and acidic residues. The tract at residues 522-546 (LEPSDDDHLMPQPKKEDINDSPDVE) is disordered. A Phosphoserine modification is found at Ser-542. HEAT repeat units follow at residues 588–628 (RTLM…VFSY), 734–771 (PNFAGILLRFLKGKLKDLGNVDFNTSNVLIRLFKLSFM), 779–821 (INEV…SIGG), 829–867 (RSIKPILQVLLQSLNQMILTARLPHERELYVELCITVPV), 870–910 (SVLA…NLTA), 919–958 (PVIDDVSKALFNLLQPQPFNHAISHNVVRILGKLGGRNRQ), 1074–1112 (NQENLFLRLLESVFYATSIKELKDDAMDLLNNLLDHFCL), 1188–1225 (SFIPELAKQFIHLCYDETYYNKRGGVLGIKVLIDNVKS), 1283–1320 (KVLENTLTDIVCELSNANPKVRNACQKSLHTISNLTGI), 1369–1408 (TFNEELFRLLQESIVLADAEDESLSTNIQKTTEYSTSEQL), 1435–1472 (NIRIRILAVFFKTMLKTSPEIINTTYEALKGSLAENSK), 1476–1512 (ELLQNGLKPLLMNLSDHQKLTVPGLDALSKLLELLIA), 1693–1734 (LKLK…RFTE), 1739–1776 (DQNPLLLDFIDFSFSNGIKASYSLKKFIFHNIIASSNK), 1918–1955 (FPIKVVTQVFVALLRSSHVEARYLVKQSLDVLTPVLHE), 2115–2155 (ELGL…LDSE), 2182–2219 (ENLPTIQNLLEKCIKSDHHDVQEALQKVLQVIMKAIKA), 2230–2267 (SPGKTFIQMLTSVITQDLQETSSVTAGVTLAWVLFMNF), 2269–2307 (DNIVPLLTPLMKTFSKLCKDHLSISQPKDAMALEEARIT), and 2536–2573 (IISSDFIDSLIEIFYQDPKAIHRAWVTLFPQVYKSIPK). The interval 2599–3744 (RTNVINMLLD…RTDVNFMPWF (1146 aa)) is head. One can recognise an FAT domain in the interval 2622–3177 (LVKYLAISYN…HFQLRTTKED (556 aa)). The 359-residue stretch at 3374–3732 (FLPTVDFVRG…CIGSAVSPRN (359 aa)) folds into the PI3K/PI4K catalytic domain. The interval 3380 to 3386 (FVRGTHS) is G-loop. A catalytic loop region spans residues 3563-3571 (MINNRTPHK). The segment at 3600 to 3625 (LKNHDLSLPPDSPIFHNNEPVPFRLT) is activation loop. In terms of domain architecture, FATC spans 3712-3744 (TPTVTTQFILDCIGSAVSPRNLARTDVNFMPWF).

It belongs to the PI3/PI4-kinase family. TRA1 subfamily. Component of the 1.8 MDa SAGA (Spt-Ada-Gcn5 acetyltransferase) complex, which is composed of 19 subunits TRA1, SPT7, TAF5, NGG1/ADA3, SGF73, SPT20/ADA5, SPT8, TAF12, TAF6, HFI1/ADA1, UBP8, GCN5, ADA2, SPT3, SGF29, TAF10, TAF9, SGF11 and SUS1. The SAGA complex is composed of 4 modules, namely the HAT (histone acetyltransferase) module (GCN5, ADA2, NGG1/ADA3 and SGF29), the DUB (deubiquitinating) module (UBP8, SGF11, SGF73 and SUS1), the core or TAF (TBP-associated factor) module (TAF5, TAF6, TAF9, TAF10 and TAF12), and the Tra1 or SPT (Suppressor of Ty) module (TRA1, HFI1/ADA1, SPT3, SPT7, SPT8 and SPT20/ADA5). The Tra1/SPT module binds activators, the core module recruits TBP (TATA-binding protein), the HAT module contains the histone H3 acetyltransferase GCN5, and the DUB module comprises the histone H2B deubiquitinase UBP8. Also identified in an altered form of SAGA, named SALSA (SAGA altered, Spt8 absent) or SLIK (SAGA-like) complex, which contains a C-terminal truncated form of SPT7 and is missing SPT8. However, it has been shown that the SAGA and SAGA-like SALSA/SLIK transcriptional coactivators are structurally and biochemically equivalent. Component of the NuA4 acetyltransferase complex, which consists of the catalytic subunit ESA1 and the 12 non-catalytic subunits ACT1, ARP4, EAF1/VID21, SWC4/EAF2, EAF3, EAF5, EAF6, EAF7, EPL1, TRA1, YAF9 and YNG2. TRA1 is the scaffold subunit for binding to a variety of transcription activators or transcription factors to recruit NuA4 for targeted gene activation. Identified in the Ada.spt complex with NGG1/ADA3 and SPT7.

Its subcellular location is the nucleus. Functionally, essential scaffold subunit of the transcription coactivator SAGA complex. SAGA acts as a general cofactor required for essentially all RNA polymerase II transcription. At the promoters, SAGA is required for transcription pre-initiation complex (PIC) recruitment. It influences RNA polymerase II transcriptional activity through different activities such as TBP interaction (via core/TAF module) and promoter selectivity, interaction with transcription activators (via Tra1/SPT module), and chromatin modification through histone acetylation (via HAT module) and deubiquitination (via DUB module). SAGA preferentially acetylates histones H3 (to form H3K9ac, H3K14ac, H3K18ac and H3K23ac) and H2B and deubiquitinates histone H2B. SAGA interacts with DNA via upstream activating sequences (UASs). Also identified in a modified version of SAGA named SALSA or SLIK. The cleavage of SPT7 and the absence of the SPT8 subunit in SLIK neither drive any major conformational differences in its structure compared with SAGA, nor significantly affect HAT, DUB, or DNA-binding activities. Component of the NuA4 histone H4/H2A acetyltransferase involved in transcription and DNA repair. This is SAGA complex/NuA4 acetyltransferase complex subunit TRA1 from Saccharomyces cerevisiae (strain ATCC 204508 / S288c) (Baker's yeast).